Here is an 84-residue protein sequence, read N- to C-terminus: Small ribosomal subunit protein bS20 (84 aa).

The protein belongs to the bacterial ribosomal protein bS20 family.

Its function is as follows. Binds directly to 16S ribosomal RNA. The protein is Small ribosomal subunit protein bS20 of Bacteroides thetaiotaomicron (strain ATCC 29148 / DSM 2079 / JCM 5827 / CCUG 10774 / NCTC 10582 / VPI-5482 / E50).